The sequence spans 285 residues: Bifunctional protein FolD (285 aa).

NADP(+) contacts are provided by residues 166 to 168 (GRS), serine 191, and isoleucine 232.

This sequence belongs to the tetrahydrofolate dehydrogenase/cyclohydrolase family. In terms of assembly, homodimer.

The enzyme catalyses (6R)-5,10-methylene-5,6,7,8-tetrahydrofolate + NADP(+) = (6R)-5,10-methenyltetrahydrofolate + NADPH. The catalysed reaction is (6R)-5,10-methenyltetrahydrofolate + H2O = (6R)-10-formyltetrahydrofolate + H(+). The protein operates within one-carbon metabolism; tetrahydrofolate interconversion. Catalyzes the oxidation of 5,10-methylenetetrahydrofolate to 5,10-methenyltetrahydrofolate and then the hydrolysis of 5,10-methenyltetrahydrofolate to 10-formyltetrahydrofolate. The sequence is that of Bifunctional protein FolD from Rickettsia typhi (strain ATCC VR-144 / Wilmington).